Reading from the N-terminus, the 186-residue chain is LSM12 homolog B (186 aa).

Residues 1 to 74 (MSSLAPCFTV…CMDIEIVKEA (74 aa)) form the Sm domain. The 103-residue stretch at 84 to 186 (EPIDLPMIRE…VVQNFCSKQF (103 aa)) folds into the AD domain.

The protein belongs to the LSM12 family. Interacts with Sbat; along with Sbat and Vlet, may form an accessory subcomplex involved in SMN complex function.

Functionally, may have an accessory function in the survival motor neuron (SMN) complex. This chain is LSM12 homolog B, found in Drosophila melanogaster (Fruit fly).